The chain runs to 1013 residues: Adhesion G-protein coupled receptor G2 (1013 aa).

Residues 1–37 (MLFSGGQYSPVGRPEEVLLIYKIFLVIICFHAILVTS) form the signal peptide. Over 38–623 (LKENAGNSSL…TSLPPSQMMA (586 aa)) the chain is Extracellular. 18 N-linked (GlcNAc...) asparagine glycosylation sites follow: Asn-44, Asn-78, Asn-92, Asn-104, Asn-128, Asn-137, Asn-155, Asn-179, Asn-187, Asn-366, Asn-431, Asn-452, Asn-457, Asn-524, Asn-538, Asn-543, Asn-547, and Asn-593. Residues 457–615 (NTTTFAAQDP…GILLDLSRTS (159 aa)) form the GAIN-B domain. 2 cysteine pairs are disulfide-bonded: Cys-566–Cys-597 and Cys-585–Cys-599. The segment at 566–615 (CVFWDLNRNGGRGGWSSDGCSVKEKRMNETICTCSHLTSFGILLDLSRTS) is GPS. Residues 604-615 (SFGILLDLSRTS) are stachel. Residues 624–644 (LTFITYIGCGLSSIFLSVTLV) form a helical membrane-spanning segment. The Cytoplasmic segment spans residues 645-663 (TYIAFEKIRRDYPSKILIQ). The helical transmembrane segment at 664–684 (LCAALLLLNLVFLLDSWIALY) threads the bilayer. Residues 685–688 (NARG) lie on the Extracellular side of the membrane. The chain crosses the membrane as a helical span at residues 689-709 (FCISVAVFLHYFLLVSFTWMG). A disulfide bond links Cys-690 and Cys-774. At 710–733 (LEAFHMYLALVKVFNTYIRKYILK) the chain is on the cytoplasmic side. The helical transmembrane segment at 734-754 (FCIVGWGIPAVVVSIVLTISP) threads the bilayer. The Extracellular portion of the chain corresponds to 755–785 (DNYGIGSYGKFPNGTPDDFCWINSSVVFYIT). Residue Asn-777 is glycosylated (N-linked (GlcNAc...) asparagine). The helical transmembrane segment at 786-806 (VVGYFCVIFLLNVSMFIVVLV) threads the bilayer. Topologically, residues 807-830 (QLCRIKKKKQLGAQRKTSIQDLRS) are cytoplasmic. Residues 831–851 (IAGLTFLLGITWGFAFFAWGP) traverse the membrane as a helical segment. At 852–853 (VN) the chain is on the extracellular side. The N-linked (GlcNAc...) asparagine glycan is linked to Asn-853. A helical transmembrane segment spans residues 854–874 (LTFMYLFAIFNTLQGFFIFIF). Asn-864 contributes to the 3beta-hydroxyandrost-5-en-17-one binding site. Residues 875–1013 (YCAAKENVRK…RGSLHFIEQM (139 aa)) are Cytoplasmic-facing. Phosphoserine is present on Ser-1006.

The protein belongs to the G-protein coupled receptor 2 family. Adhesion G-protein coupled receptor (ADGR) subfamily. As to quaternary structure, heterodimer of 2 chains generated by proteolytic processing; the large extracellular N-terminal fragment and the membrane-bound C-terminal fragment predominantly remain associated and non-covalently linked. Interacts with CFTR. In terms of processing, proteolytically cleaved into 2 subunits, an extracellular subunit and a seven-transmembrane subunit. Highly glycosylated. In terms of tissue distribution, epididymis-specific expression (at protein level). Associated with apical membranes of efferent ductule and proximal epididymal duct epithelia.

It localises to the apical cell membrane. With respect to regulation, forms a heterodimer of 2 chains generated by proteolytic processing that remain associated through non-covalent interactions mediated by the GAIN-B domain. In the inactivated receptor, the Stachel sequence (also named stalk) is embedded in the GAIN-B domain, where it adopts a beta-strand conformation. On activation, the Stachel moves into the 7 transmembrane region and adopts a twisted hook-shaped configuration that forms contacts within the receptor, leading to coupling of a G-alpha protein, which activates signaling. The cleaved GAIN-B and N-terminal domains can then dissociate from the rest of the receptor. Deoxycorticosterone (DOC) acts as an antagonist of ADGRG2. In terms of biological role, adhesion G-protein coupled receptor (aGPCR) for steroid hormones, such as dehydroepiandrosterone (DHEA; also named 3beta-hydroxyandrost-5-en-17-one) and androstenedione. Involved in a signal transduction pathway controlling epididymal function and male fertility. Ligand binding causes a conformation change that triggers signaling via guanine nucleotide-binding proteins (G proteins) and modulates the activity of downstream effectors, such as adenylate cyclase. ADGRG2 is coupled to G(s) G proteins and mediates activation of adenylate cyclase activity. Also able to couple with G(q) G proteins in vitro. May regulate fluid exchange within epididymis. The protein is Adhesion G-protein coupled receptor G2 of Rattus norvegicus (Rat).